A 544-amino-acid polypeptide reads, in one-letter code: Glycoprotein gp100 (544 aa).

The first 19 residues, 1-19 (MKNFILLVFLFLLVSNSLG), serve as a signal peptide directing secretion. Residues 20-489 (KSNKKDDQSP…SGGGGNKKLY (470 aa)) are Extracellular-facing. A glycan (N-linked (GlcNAc...) asparagine) is linked at asparagine 80. Over residues 84–99 (EPQNNPIPTVSINPDQ) the composition is skewed to polar residues. Residues 84-215 (EPQNNPIPTV…TPTRPSSSVS (132 aa)) form a disordered region. Composition is skewed to low complexity over residues 126 to 142 (SKPT…TIPP), 150 to 165 (PQTT…TPTP), and 189 to 199 (PKPTKSSKPTK). Asparagine 224, asparagine 308, asparagine 332, asparagine 366, asparagine 380, asparagine 410, asparagine 422, and asparagine 478 each carry an N-linked (GlcNAc...) asparagine glycan. The tract at residues 444–480 (KPSTTDDDNNKNNDDGDSEIDSVGKSAVDSSKSNNNS) is disordered. A helical transmembrane segment spans residues 490–510 (LLIILPTVLFIIVAALVAIFI). Topologically, residues 511 to 544 (KTRVSQNSGSKVNKNNNKKDSINVPFQMLDEITT) are cytoplasmic.

In terms of processing, N- and O-glycosylated.

It localises to the membrane. This chain is Glycoprotein gp100 (gppA), found in Dictyostelium discoideum (Social amoeba).